We begin with the raw amino-acid sequence, 655 residues long: 1-deoxy-D-xylulose-5-phosphate synthase (655 aa).

Thiamine diphosphate contacts are provided by residues H73 and 114–116 (SHA). Mg(2+) is bound at residue D145. Residues 146–147 (GA), N174, Y285, and E367 each bind thiamine diphosphate. N174 contributes to the Mg(2+) binding site. Residues 626-655 (RQPAIEDDPTSPGEAAPAGERAGEAIGDQR) are disordered. Residues 646 to 655 (RAGEAIGDQR) are compositionally biased toward basic and acidic residues.

Belongs to the transketolase family. DXPS subfamily. In terms of assembly, homodimer. Mg(2+) is required as a cofactor. Thiamine diphosphate serves as cofactor.

It catalyses the reaction D-glyceraldehyde 3-phosphate + pyruvate + H(+) = 1-deoxy-D-xylulose 5-phosphate + CO2. It functions in the pathway metabolic intermediate biosynthesis; 1-deoxy-D-xylulose 5-phosphate biosynthesis; 1-deoxy-D-xylulose 5-phosphate from D-glyceraldehyde 3-phosphate and pyruvate: step 1/1. In terms of biological role, catalyzes the acyloin condensation reaction between C atoms 2 and 3 of pyruvate and glyceraldehyde 3-phosphate to yield 1-deoxy-D-xylulose-5-phosphate (DXP). This chain is 1-deoxy-D-xylulose-5-phosphate synthase, found in Frankia casuarinae (strain DSM 45818 / CECT 9043 / HFP020203 / CcI3).